The following is a 74-amino-acid chain: Coleoptericin (74 aa).

The segment at 1–74 (SLQGGAPNFP…TWHVGGTYRR (74 aa)) is disordered.

This sequence belongs to the coleoptericin family.

It localises to the secreted. Its function is as follows. Responsible for the anti Gram-negative activity of immune hemolymph of Z.atratus. In Zophobas atratus (Giant mealworm beetle), this protein is Coleoptericin.